The sequence spans 211 residues: Large ribosomal subunit protein uL3 (211 aa).

An N5-methylglutamine modification is found at Q150.

The protein belongs to the universal ribosomal protein uL3 family. As to quaternary structure, part of the 50S ribosomal subunit. Forms a cluster with proteins L14 and L19. In terms of processing, methylated by PrmB.

In terms of biological role, one of the primary rRNA binding proteins, it binds directly near the 3'-end of the 23S rRNA, where it nucleates assembly of the 50S subunit. This chain is Large ribosomal subunit protein uL3, found in Pseudomonas aeruginosa (strain LESB58).